The chain runs to 102 residues: Large ribosomal subunit protein bL21 (102 aa).

This sequence belongs to the bacterial ribosomal protein bL21 family. Part of the 50S ribosomal subunit. Contacts protein L20.

This protein binds to 23S rRNA in the presence of protein L20. The chain is Large ribosomal subunit protein bL21 from Limosilactobacillus fermentum (strain NBRC 3956 / LMG 18251) (Lactobacillus fermentum).